Reading from the N-terminus, the 263-residue chain is HTH-type transcriptional repressor NanR (263 aa).

The disordered stretch occupies residues 1–22 (MGLMNAFDSQTEDSSPAIGRNL). The 69-residue stretch at 30–98 (KKLSEMVEEE…NGERARVSRP (69 aa)) folds into the HTH gntR-type domain. A DNA-binding region (H-T-H motif) is located at residues 58–77 (ERELMAFFNVGRPSVREALA).

This sequence belongs to the NanR family.

Functionally, transcriptional repressor that controls expression of the genes required for the catabolism of sialic acids. The chain is HTH-type transcriptional repressor NanR from Shigella boydii serotype 4 (strain Sb227).